A 2925-amino-acid polypeptide reads, in one-letter code: Otogelin (2925 aa).

A signal peptide spans Met1–Ser25. The disordered stretch occupies residues Gly39–Glu69. Polar residues predominate over residues Pro56–Glu69. Residues His102–Gln139 form the EGF-like domain. Cystine bridges form between Cys106–Cys120, Cys114–Cys126, Cys128–Cys138, Cys152–Cys285, and Cys199–Cys206. One can recognise a VWFD 1 domain in the interval Ser150–Pro322. The interval Glu316 to Cys335 is disordered. The span at Thr326–Cys335 shows a compositional bias: polar residues. A VWFD 2 domain is found at Ala512 to Ser688. Disulfide bonds link Cys514-Cys652, Cys536-Cys687, and Cys558-Cys566. In terms of domain architecture, TIL spans Cys780–Cys844. A glycan (N-linked (GlcNAc...) asparagine) is linked at Asn914. The VWFD 3 domain occupies Ser984–Thr1152. 2 disulfide bridges follow: Cys986–Cys1115 and Cys1030–Cys1037. The disordered stretch occupies residues Leu1476–Thr1540. N-linked (GlcNAc...) asparagine glycosylation is present at Asn1478. Residues Pro1502–Thr1528 are compositionally biased toward low complexity. Asn1612 is a glycosylation site (N-linked (GlcNAc...) asparagine). Disordered regions lie at residues Gly1636–Val1679, Val1693–Ala1715, and Lys1737–Ser1788. A compositionally biased stretch (polar residues) spans Ser1650–Pro1659. Positions Pro1694 to Pro1708 are enriched in low complexity. Over residues Ser1751 to Pro1764 the composition is skewed to pro residues. The VWFD 4 domain maps to Cys2110 to Ser2289. 5 disulfides stabilise this stretch: Cys2112–Cys2249, Cys2840–Cys2889, Cys2854–Cys2903, Cys2865–Cys2920, and Cys2869–Cys2922. A CTCK domain is found at Cys2840–Ser2925.

This sequence belongs to the otogelin family. Post-translationally, N-glycosylated. Not O-glycosylated.

Its subcellular location is the apical cell membrane. It localises to the secreted. The protein localises to the extracellular space. Glycoprotein specific to acellular membranes of the inner ear. May be required for the anchoring of the otoconial membranes and cupulae to the underlying neuroepithelia in the vestibule. May be involved in the organization and/or stabilization of the fibrillar network that compose the tectorial membrane in the cochlea. May play a role in mechanotransduction processes. The sequence is that of Otogelin (OTOG) from Homo sapiens (Human).